We begin with the raw amino-acid sequence, 284 residues long: L-ribulose-5-phosphate 3-epimerase UlaE (284 aa).

This sequence belongs to the L-ribulose-5-phosphate 3-epimerase family.

It carries out the reaction L-ribulose 5-phosphate = L-xylulose 5-phosphate. The protein operates within cofactor degradation; L-ascorbate degradation; D-xylulose 5-phosphate from L-ascorbate: step 3/4. Functionally, catalyzes the isomerization of L-xylulose-5-phosphate to L-ribulose-5-phosphate. Is involved in the anaerobic L-ascorbate utilization. The chain is L-ribulose-5-phosphate 3-epimerase UlaE from Salmonella heidelberg (strain SL476).